A 558-amino-acid chain; its full sequence is MLQTSSSSATASLQQQLSKQYANSFSNDGSSFSSKNNQQYSEIVNYISFNQDASCITIGLKNGYKIFNCQPNFGRSFQFKNDESTGIVEMLYCTSLLATVAQGEEIGSSPRKLKIINTKTKSTICDLIFPSTILQVKLTNTRLIVVLEDQIYLYDITTMKLLHTIETSPNLSGLSAISYDDSNSYLAYPSPPKTITHDSLLASGINTNGGSNSTQNNISSVSNTPNRVGDVIIFNLTSLQPISVIEAHKSTIASMAFSNNGLYLATASDKGTIVRIFEVATGTKLYQFRRGTYPTKIYSLRFSADDKYVLATSSSLTVHIFRLGEEEALETKHKKKKIPAVATILEEETEGSQSNEQTKSIKRNSEEFEDIRDDGDDSDVDDEDGDIDDESLEVIPAKQRKLSQGSTNSYTSVNSEDVQSNSPKTEPLIDQNRLSMARIIRRSSQTLGRKAAQKMGDFLPSRFSSILEPTRNFASLKINAHSKDTKSVAVMNNVLQQDLIPQTYLASDNASAKQDFMEVSLFHIYVVTTEGMLYTYGLDPERGGDCILLNSHCILDEY.

WD repeat units follow at residues 247–287 (AHKS…KLYQ) and 292–331 (TYPT…ALET). Positions 288–292 (FRRGT) match the L/FRRG motif motif. The disordered stretch occupies residues 344–426 (ILEEETEGSQ…DVQSNSPKTE (83 aa)). Over residues 367–392 (EFEDIRDDGDDSDVDDEDGDIDDESL) the composition is skewed to acidic residues. Residues 402–424 (LSQGSTNSYTSVNSEDVQSNSPK) show a composition bias toward polar residues.

This sequence belongs to the WD repeat PROPPIN family. As to quaternary structure, component of the PI(3,5)P2 regulatory complex.

The protein resides in the preautophagosomal structure membrane. Its subcellular location is the vacuole membrane. It localises to the endosome membrane. The PI(3,5)P2 regulatory complex regulates both the synthesis and turnover of phosphatidylinositol 3,5-bisphosphate (PtdIns(3,5)P2). Necessary for proper vacuole morphology. Plays an important role in osmotically-induced vacuole fragmentation. Required for cytoplasm to vacuole transport (Cvt) vesicle formation, pexophagy and starvation-induced autophagy. Involved in correct ATG9 trafficking to the pre-autophagosomal structure. Might also be involved in premeiotic DNA replication. The polypeptide is Autophagy-related protein 18 (ATG18) (Candida albicans (strain SC5314 / ATCC MYA-2876) (Yeast)).